A 237-amino-acid polypeptide reads, in one-letter code: Indole-3-glycerol phosphate synthase (237 aa).

Belongs to the TrpC family.

The catalysed reaction is 1-(2-carboxyphenylamino)-1-deoxy-D-ribulose 5-phosphate + H(+) = (1S,2R)-1-C-(indol-3-yl)glycerol 3-phosphate + CO2 + H2O. Its pathway is amino-acid biosynthesis; L-tryptophan biosynthesis; L-tryptophan from chorismate: step 4/5. In Thermoplasma volcanium (strain ATCC 51530 / DSM 4299 / JCM 9571 / NBRC 15438 / GSS1), this protein is Indole-3-glycerol phosphate synthase.